The sequence spans 164 residues: Urease subunit beta (164 aa).

Composition is skewed to polar residues over residues 1–10 (MSTKTNSTKA) and 20–32 (TNRGTKSSAGYSE). A disordered region spans residues 1 to 32 (MSTKTNSTKATSEKTDSLKTNRGTKSSAGYSE).

This sequence belongs to the urease beta subunit family. As to quaternary structure, heterotrimer of UreA (gamma), UreB (beta) and UreC (alpha) subunits. Three heterotrimers associate to form the active enzyme.

The protein resides in the cytoplasm. It carries out the reaction urea + 2 H2O + H(+) = hydrogencarbonate + 2 NH4(+). It functions in the pathway nitrogen metabolism; urea degradation; CO(2) and NH(3) from urea (urease route): step 1/1. This Yersinia enterocolitica serotype O:8 / biotype 1B (strain NCTC 13174 / 8081) protein is Urease subunit beta.